The primary structure comprises 372 residues: Fatty acid 2-hydroxylase (372 aa).

Residues 8 to 86 enclose the Cytochrome b5 heme-binding domain; that stretch reads AASFTPAEVQ…LEQYYVGELR (79 aa). The heme site is built by His-43 and His-69. Transmembrane regions (helical) follow at residues 168-188 and 213-233; these read VWYSVPIIWVPLVLYLSWSYY and SVFIGLFVLGMLFWTFVEYVI. Residues 219–361 enclose the Fatty acid hydroxylase domain; sequence FVLGMLFWTF…TKLWDYFFHT (143 aa). Residues His-234, His-239, His-257, His-260, and His-261 each coordinate Zn(2+). 2 helical membrane passes run 268-288 and 290-310; these read SRLVFPPVPASLVIAFFYVFL and LILPETVGGIIFAGGLLGYVL. Zn(2+) is bound by residues His-315, His-319, His-336, His-339, and His-340.

This sequence belongs to the sterol desaturase family. SCS7 subfamily. Requires Zn(2+) as cofactor. Expressed in brain (at protein level). Detected in cerebellum and forebrain. Expression in the white matter is mainly restricted in oligodendrocytes. Expressed in stomach, kidney, skin and testis. Expressed in sebaceous gland.

It is found in the endoplasmic reticulum membrane. The protein localises to the microsome membrane. It catalyses the reaction a 1,2-saturated fatty acid + 2 Fe(II)-[cytochrome b5] + O2 + 2 H(+) = a (R)-2-hydroxy fatty acid + 2 Fe(III)-[cytochrome b5] + H2O. The enzyme catalyses hexadecanoate + 2 Fe(II)-[cytochrome b5] + O2 + 2 H(+) = (R)-2-hydroxyhexadecanoate + 2 Fe(III)-[cytochrome b5] + H2O. The catalysed reaction is octadecanoate + 2 Fe(II)-[cytochrome b5] + O2 + 2 H(+) = (R)-2-hydroxyoctadecanoate + 2 Fe(III)-[cytochrome b5] + H2O. It carries out the reaction docosanoate + 2 Fe(II)-[cytochrome b5] + O2 + 2 H(+) = 2-hydroxydocosanoate + 2 Fe(III)-[cytochrome b5] + H2O. It catalyses the reaction tetracosanoate + 2 Fe(II)-[cytochrome b5] + O2 + 2 H(+) = (R)-2-hydroxytetracosanoate + 2 Fe(III)-[cytochrome b5] + H2O. The protein operates within sphingolipid metabolism; galactosylceramide biosynthesis. It functions in the pathway lipid metabolism; fatty acid metabolism. Catalyzes the hydroxylation of free fatty acids at the C-2 position to produce 2-hydroxy fatty acids, which are building blocks of sphingolipids and glycosphingolipids common in neural tissue and epidermis. FA2H is stereospecific for the production of (R)-2-hydroxy fatty acids. Plays an essential role in the synthesis of galactosphingolipids of the myelin sheath. Responsible for the synthesis of sphingolipids and glycosphingolipids involved in the formation of epidermal lamellar bodies critical for skin permeability barrier. Participates in the synthesis of glycosphingolipids and a fraction of type II wax diesters in sebaceous gland, specifically regulating hair follicle homeostasis. Involved in the synthesis of sphingolipids of plasma membrane rafts, controlling lipid raft mobility and trafficking of raft-associated proteins. The sequence is that of Fatty acid 2-hydroxylase from Mus musculus (Mouse).